The primary structure comprises 471 residues: MPNAPEVNSVWDELLWRGLVCVSTDQGALKELLDGPPIRFYCGFDPTAPSLHVGNLAQILIMRRLQLAGHRPIALVGGSTGLIGDPRPGGERQLHSHEQVQEWVRALQQQLSRFLDFKGAAAAVLVNNLDWTKSLTALDFLRELGKHFRVNAMLKKDAVAARLSSTEGISYTEFSYQILQSLDFRQLYLDYKCVLQIGGSDQWGNITSGVDLIRKTEGAGVHAFGSPLLTASDGSKFGKTEGNAIWLDADLTSPWSFYQFFLNSDDADIPRLLRVFTFFTRSEIEDLNRSVRENASARLAHRHLAYSVTRLVHGADVADQVLLACSVLFGDGGALGKTQTGLPRIDSDTLNDSSGVTTIKAQDNTYTPYSPEGVRFAGTFPVDPRFLRSILFELPNATVSAHDLITHILQKVGLCRSLSEARRLISQGGIYVNNIKVTCPDALLDSFLDNSMPIRAAILRKGKKHLAAVFY.

Tyr-41 contacts L-tyrosine. The 'HIGH' region motif lies at 46-55 (PTAPSLHVGN). Residues Tyr-176 and Gln-180 each coordinate L-tyrosine. The 'KMSKS' region motif lies at 236–240 (KFGKT). Lys-239 serves as a coordination point for ATP. The 69-residue stretch at 403–471 (DLITHILQKV…GKKHLAAVFY (69 aa)) folds into the S4 RNA-binding domain.

The protein belongs to the class-I aminoacyl-tRNA synthetase family. TyrS type 1 subfamily. In terms of assembly, homodimer.

It is found in the cytoplasm. The enzyme catalyses tRNA(Tyr) + L-tyrosine + ATP = L-tyrosyl-tRNA(Tyr) + AMP + diphosphate + H(+). Its function is as follows. Catalyzes the attachment of tyrosine to tRNA(Tyr) in a two-step reaction: tyrosine is first activated by ATP to form Tyr-AMP and then transferred to the acceptor end of tRNA(Tyr). The sequence is that of Tyrosine--tRNA ligase from Tropheryma whipplei (strain Twist) (Whipple's bacillus).